We begin with the raw amino-acid sequence, 140 residues long: Gonadotropin subunit beta-2 (140 aa).

An N-terminal signal peptide occupies residues 1 to 23 (MGTPVKILVVLFSVIVLLAVAQS). 6 cysteine pairs are disulfide-bonded: Cys29-Cys77, Cys43-Cys92, Cys46-Cys130, Cys54-Cys108, Cys58-Cys110, and Cys113-Cys120. Residue Asn33 is glycosylated (N-linked (GlcNAc...) asparagine).

This sequence belongs to the glycoprotein hormones subunit beta family. As to quaternary structure, heterodimer of an alpha and a beta chain.

It is found in the secreted. Functionally, involved in gametogenesis and steroidogenesis. This is Gonadotropin subunit beta-2 (cgbb) from Carassius auratus (Goldfish).